The sequence spans 312 residues: Putative tricarboxylate transport protein, mitochondrial (312 aa).

Solcar repeat units follow at residues 23–111 (EKTV…LKSQ), 122–208 (VMRL…LKDW), and 218–303 (ISKP…IIEF). 6 helical membrane-spanning segments follow: residues 29–49 (IVIG…TEYV), 75–95 (VNGH…YGSI), 126–146 (LCGL…METV), 164–184 (FVHG…YKGV), 221–241 (PIVG…NTPI), and 286–306 (VCLD…FLDV).

The protein belongs to the mitochondrial carrier (TC 2.A.29) family.

It is found in the mitochondrion inner membrane. In terms of biological role, transport of citrate across inner mitochondrial membrane. This chain is Putative tricarboxylate transport protein, mitochondrial, found in Caenorhabditis elegans.